The sequence spans 374 residues: UPF0674 endoplasmic reticulum membrane protein C2G5.01 (374 aa).

A helical membrane pass occupies residues 49–68; the sequence is FRLEFVILACFFLYVFSFIT. Asn287 carries an N-linked (GlcNAc...) asparagine glycan. The interval 335–374 is disordered; sequence KAAKKKVKSSGDISKLSESDQKKRMERERQRKMRRRAKKM. The segment covering 349-363 has biased composition (basic and acidic residues); that stretch reads KLSESDQKKRMERER. The span at 364–374 shows a compositional bias: basic residues; it reads QRKMRRRAKKM.

It belongs to the UPF0674 family.

It localises to the endoplasmic reticulum membrane. In Schizosaccharomyces pombe (strain 972 / ATCC 24843) (Fission yeast), this protein is UPF0674 endoplasmic reticulum membrane protein C2G5.01.